The sequence spans 412 residues: Phosphoglycerate kinase (412 aa).

Residues 22–24 (DFN), Arg37, 60–63 (HLGK), Arg120, and Arg172 each bind substrate. ATP-binding positions include Lys223, Gly310, Glu341, and 368–371 (GGDS).

The protein belongs to the phosphoglycerate kinase family. Monomer.

It is found in the cytoplasm. It catalyses the reaction (2R)-3-phosphoglycerate + ATP = (2R)-3-phospho-glyceroyl phosphate + ADP. It participates in carbohydrate degradation; glycolysis; pyruvate from D-glyceraldehyde 3-phosphate: step 2/5. The polypeptide is Phosphoglycerate kinase (Spiroplasma citri).